We begin with the raw amino-acid sequence, 422 residues long: Tyrosine--tRNA ligase (422 aa).

Residue Tyr-35 participates in L-tyrosine binding. Residues 40–49 (PTAPSLHVGH) carry the 'HIGH' region motif. L-tyrosine contacts are provided by Tyr-170 and Gln-174. The 'KMSKS' region motif lies at 231–235 (KFGKT). Lys-234 provides a ligand contact to ATP. Residues 353 to 419 (APVVDLFAEV…GKKNLAAVEI (67 aa)) form the S4 RNA-binding domain.

The protein belongs to the class-I aminoacyl-tRNA synthetase family. TyrS type 1 subfamily. In terms of assembly, homodimer.

The protein resides in the cytoplasm. The enzyme catalyses tRNA(Tyr) + L-tyrosine + ATP = L-tyrosyl-tRNA(Tyr) + AMP + diphosphate + H(+). Its function is as follows. Catalyzes the attachment of tyrosine to tRNA(Tyr) in a two-step reaction: tyrosine is first activated by ATP to form Tyr-AMP and then transferred to the acceptor end of tRNA(Tyr). In Streptomyces coelicolor (strain ATCC BAA-471 / A3(2) / M145), this protein is Tyrosine--tRNA ligase.